The chain runs to 77 residues: Large ribosomal subunit protein uL24 (77 aa).

A disordered region spans residues 42–61; it reads KKHQKPSQTNANGGVVESEG.

Belongs to the universal ribosomal protein uL24 family. As to quaternary structure, part of the 50S ribosomal subunit.

In terms of biological role, one of two assembly initiator proteins, it binds directly to the 5'-end of the 23S rRNA, where it nucleates assembly of the 50S subunit. Functionally, one of the proteins that surrounds the polypeptide exit tunnel on the outside of the subunit. The polypeptide is Large ribosomal subunit protein uL24 (Lactobacillus acidophilus (strain ATCC 700396 / NCK56 / N2 / NCFM)).